Here is a 1284-residue protein sequence, read N- to C-terminus: Zinc finger protein 423 (1284 aa).

Disordered stretches follow at residues 1–64 and 87–117; these read MHKK…MEDE and AHRCPGDGDDDPQLSWVASSPSSKDVASPTQ. The span at 34–46 shows a compositional bias: basic and acidic residues; the sequence is CDQKTSRALEDRN. S47 and S50 each carry phosphoserine. Residues 54-64 are compositionally biased toward acidic residues; it reads RNEDDEDMEDE. The C2H2-type 1; degenerate zinc-finger motif lies at 67–93; sequence YTCDHCQQDFESLADLTDHRAHRCPGD. The span at 102–117 shows a compositional bias: polar residues; it reads WVASSPSSKDVASPTQ. 7 C2H2-type zinc fingers span residues 138 to 160, 166 to 188, 194 to 216, 222 to 244, 263 to 286, 295 to 318, and 323 to 345; these read YPCQFCDKSFIRLSYLKRHEQIH, FKCTYCSRLFKHKRSRDRHIKLH, YHCHECEAAFSRSDHLKIHLKTH, FKCTVCKRGFSSTSSLQSHMQAH, FMCDYCEDTFSQTEELEKHVLTRH, LQCIHCPEVFVDENTLLAHIHQAH, and HKCPMCPEQFSSVEGVYCHLDSH. Positions 346–398 are disordered; it reads RQPDSSNHSVSPDPVLGSVASMSSATPDSSASVERGSTPDSTLKPLRGQKKMR. The span at 363–377 shows a compositional bias: low complexity; it reads SVASMSSATPDSSAS. The C2H2-type 9; degenerate zinc finger occupies 409–433; that stretch reads YSCPYCSKRDFNSLAVLEIHLKTIH. 3 C2H2-type zinc fingers span residues 441–464, 480–503, and 517–540; these read HTCQICLDSMPTLYNLNEHVRKLH, FHCNYCPEMFADINSLQEHIRVSH, and FFCNQCSMGFLTESSLTEHIQQAH. Residues 563–588 form a C2H2-type 13; atypical zinc finger; sequence YSCPYCTNSPIFGSILKLTKHIKENH. The tract at residues 590–624 is disordered; it reads NIPLAHSKKSKAEQSPVSSDVEVSSPKRQRLSASA. S604 carries the post-translational modification Phosphoserine. Positions 604 to 615 are enriched in low complexity; that stretch reads SPVSSDVEVSSP. 7 consecutive C2H2-type zinc fingers follow at residues 632 to 654, 662 to 684, 692 to 715, 720 to 743, 750 to 773, 781 to 803, and 807 to 830; these read YPCNQCDLKFSNFESFQTHLKLH, QACPQCKEDFDSQESLLQHLTVH, YVCESCDKQFSSVDDLQKHLLDMH, YHCTLCQEVFDSKVSIQVHLAVKH, YRCTACNWDFRKEADLQVHVKHSH, HKCIFCGETFSTEVELQCHITTH, and YNCKFCSKAFHAIILLEKHLREKH. The C2H2-type 21; degenerate zinc finger occupies 886-908; that stretch reads YGCDICGAAYTMEVLLQNHRLRD. 3 C2H2-type zinc fingers span residues 930–952, 959–981, and 1020–1042; these read HKCNVCSRTFFSENGLREHLQTH, YMCPICGERFPSLLTLTEHKVTH, and FRCVVCMQTVTSTLELKIHGTFH. S1054 carries the phosphoserine modification. The C2H2-type 25; degenerate zinc-finger motif lies at 1064–1082; sequence YKCALCLKEFRSKQDLVKL. 5 consecutive C2H2-type zinc fingers follow at residues 1120 to 1143, 1168 to 1190, 1198 to 1220, 1229 to 1252, and 1259 to 1282; these read LRCPECSVKFESAEDLESHMQVDH, YQCIKCQMTFENEREIQIHVANH, HECKLCNQMFDSPAKLLCHLIEH, FKCPVCFTVFVQANKLQQHIFAVH, and YDCSQCPQKFFFQTELQNHTMSQH. Residues 1136–1147 are compositionally biased toward basic and acidic residues; the sequence is ESHMQVDHRDLT. A disordered region spans residues 1136-1163; the sequence is ESHMQVDHRDLTPETSGPRKGTQTSPVP.

It belongs to the krueppel C2H2-type zinc-finger protein family. As to quaternary structure, homodimer. Interacts with EBF1. Interacts with SMAD1 and SMAD4. Interacts with PARP1. Interacts with CEP290. As to expression, expressed in brain, lung, skeletal muscle, heart, pancreas and kidney but not liver or placenta. Also expressed in aorta, ovary, pituitary, small intestine, fetal brain, fetal kidney and, within the adult brain, in the substantia nigra, medulla, amygdala, thalamus and cerebellum.

It localises to the nucleus. In terms of biological role, transcription factor that can both act as an activator or a repressor depending on the context. Plays a central role in BMP signaling and olfactory neurogenesis. Associates with SMADs in response to BMP2 leading to activate transcription of BMP target genes. Acts as a transcriptional repressor via its interaction with EBF1, a transcription factor involved in terminal olfactory receptor neurons differentiation; this interaction preventing EBF1 to bind DNA and activate olfactory-specific genes. Involved in olfactory neurogenesis by participating in a developmental switch that regulates the transition from differentiation to maturation in olfactory receptor neurons. Controls proliferation and differentiation of neural precursors in cerebellar vermis formation. This chain is Zinc finger protein 423 (ZNF423), found in Homo sapiens (Human).